The following is an 86-amino-acid chain: Exodeoxyribonuclease 7 small subunit (86 aa).

A disordered region spans residues 64-86 (SNPETVQDKTDTDEPDSNEFSLT).

It belongs to the XseB family. As to quaternary structure, heterooligomer composed of large and small subunits.

The protein localises to the cytoplasm. It catalyses the reaction Exonucleolytic cleavage in either 5'- to 3'- or 3'- to 5'-direction to yield nucleoside 5'-phosphates.. Bidirectionally degrades single-stranded DNA into large acid-insoluble oligonucleotides, which are then degraded further into small acid-soluble oligonucleotides. The protein is Exodeoxyribonuclease 7 small subunit of Akkermansia muciniphila (strain ATCC BAA-835 / DSM 22959 / JCM 33894 / BCRC 81048 / CCUG 64013 / CIP 107961 / Muc).